The chain runs to 264 residues: ATP synthase subunit a (264 aa).

The next 7 helical transmembrane spans lie at 29–49 (TWHI…LWIF), 90–110 (IAPL…MDMI), 111–131 (PVDW…KVVP), 134–154 (DVNI…YYSI), 177–197 (IPVN…SLAL), 208–228 (LIFI…TLGV), and 235–255 (LIFH…LTIV).

Belongs to the ATPase A chain family. As to quaternary structure, F-type ATPases have 2 components, CF(1) - the catalytic core - and CF(0) - the membrane proton channel. CF(1) has five subunits: alpha(3), beta(3), gamma(1), delta(1), epsilon(1). CF(0) has three main subunits: a(1), b(2) and c(9-12). The alpha and beta chains form an alternating ring which encloses part of the gamma chain. CF(1) is attached to CF(0) by a central stalk formed by the gamma and epsilon chains, while a peripheral stalk is formed by the delta and b chains.

The protein resides in the cell inner membrane. Its function is as follows. Key component of the proton channel; it plays a direct role in the translocation of protons across the membrane. The polypeptide is ATP synthase subunit a (Shewanella denitrificans (strain OS217 / ATCC BAA-1090 / DSM 15013)).